The primary structure comprises 256 residues: Probable hydroxyacylglutathione hydrolase glo2 (256 aa).

Zn(2+) contacts are provided by His63, His65, Asp67, His68, His118, and Asp139. Residues Arg148, His178–Tyr180, and Arg250–Lys253 each bind substrate. His178 is a Zn(2+) binding site.

Belongs to the metallo-beta-lactamase superfamily. Glyoxalase II family. Requires Zn(2+) as cofactor.

Its subcellular location is the cytoplasm. It localises to the nucleus. The enzyme catalyses an S-(2-hydroxyacyl)glutathione + H2O = a 2-hydroxy carboxylate + glutathione + H(+). It carries out the reaction (R)-S-lactoylglutathione + H2O = (R)-lactate + glutathione + H(+). The protein operates within secondary metabolite metabolism; methylglyoxal degradation; (R)-lactate from methylglyoxal: step 2/2. Thiolesterase that catalyzes the hydrolysis of S-D-lactoylglutathione to form glutathione and D-lactic acid. Involved in the metabolism of methylglyoxal, a toxic compound for yeast proliferation, by converting methylglyoxal to lactate via S-D-lactoylglutathione by sequential enzyme reactions catalyzed by glyoxalase I and glyoxalase II. The polypeptide is Probable hydroxyacylglutathione hydrolase glo2 (glo2) (Schizosaccharomyces pombe (strain 972 / ATCC 24843) (Fission yeast)).